Consider the following 239-residue polypeptide: Pyridoxine 5'-phosphate synthase (239 aa).

3-amino-2-oxopropyl phosphate is bound at residue Asn-7. 9–10 (DH) serves as a coordination point for 1-deoxy-D-xylulose 5-phosphate. Arg-18 lines the 3-amino-2-oxopropyl phosphate pocket. His-43 (proton acceptor) is an active-site residue. Positions 45 and 50 each coordinate 1-deoxy-D-xylulose 5-phosphate. The active-site Proton acceptor is the Glu-70. Thr-100 contacts 1-deoxy-D-xylulose 5-phosphate. His-191 functions as the Proton donor in the catalytic mechanism. 3-amino-2-oxopropyl phosphate is bound by residues Gly-192 and 213 to 214 (GH).

It belongs to the PNP synthase family. As to quaternary structure, homooctamer; tetramer of dimers.

It is found in the cytoplasm. It catalyses the reaction 3-amino-2-oxopropyl phosphate + 1-deoxy-D-xylulose 5-phosphate = pyridoxine 5'-phosphate + phosphate + 2 H2O + H(+). Its pathway is cofactor biosynthesis; pyridoxine 5'-phosphate biosynthesis; pyridoxine 5'-phosphate from D-erythrose 4-phosphate: step 5/5. In terms of biological role, catalyzes the complicated ring closure reaction between the two acyclic compounds 1-deoxy-D-xylulose-5-phosphate (DXP) and 3-amino-2-oxopropyl phosphate (1-amino-acetone-3-phosphate or AAP) to form pyridoxine 5'-phosphate (PNP) and inorganic phosphate. In Citrifermentans bemidjiense (strain ATCC BAA-1014 / DSM 16622 / JCM 12645 / Bem) (Geobacter bemidjiensis), this protein is Pyridoxine 5'-phosphate synthase.